A 718-amino-acid polypeptide reads, in one-letter code: Polyribonucleotide nucleotidyltransferase (718 aa).

Residues D506 and D512 each coordinate Mg(2+). Positions 572–632 constitute a KH domain; it reads PKLELFSVDP…EQIKAAKDYI (61 aa). An S1 motif domain is found at 657-718; sequence GQEFQGIVKK…NGKISVDLCE (62 aa).

Belongs to the polyribonucleotide nucleotidyltransferase family. Mg(2+) is required as a cofactor.

It is found in the cytoplasm. It catalyses the reaction RNA(n+1) + phosphate = RNA(n) + a ribonucleoside 5'-diphosphate. Functionally, involved in mRNA degradation. Catalyzes the phosphorolysis of single-stranded polyribonucleotides processively in the 3'- to 5'-direction. In Campylobacter jejuni subsp. doylei (strain ATCC BAA-1458 / RM4099 / 269.97), this protein is Polyribonucleotide nucleotidyltransferase.